The sequence spans 805 residues: Sucrose synthase (805 aa).

Residues 275-752 (MVFNVVILSP…GLKRIEEKYT (478 aa)) form a GT-B glycosyltransferase region.

It belongs to the glycosyltransferase 1 family. Plant sucrose synthase subfamily. Expression is at least 10-fold higher in tubers compared to photosynthetically active tissues.

The catalysed reaction is an NDP-alpha-D-glucose + D-fructose = a ribonucleoside 5'-diphosphate + sucrose + H(+). Sucrose-cleaving enzyme that provides UDP-glucose and fructose for various metabolic pathways. The chain is Sucrose synthase from Solanum tuberosum (Potato).